The primary structure comprises 199 residues: Recombination protein RecR (199 aa).

The C4-type zinc finger occupies Cys-57 to Cys-72. A Toprim domain is found at Lys-80–Ser-176.

The protein belongs to the RecR family.

In terms of biological role, may play a role in DNA repair. It seems to be involved in an RecBC-independent recombinational process of DNA repair. It may act with RecF and RecO. This is Recombination protein RecR from Pediococcus pentosaceus (strain ATCC 25745 / CCUG 21536 / LMG 10740 / 183-1w).